Here is a 337-residue protein sequence, read N- to C-terminus: Adenine deaminase (337 aa).

The Zn(2+) site is built by His17, His19, and His197. Residue Glu200 is the Proton donor of the active site. Asp278 contributes to the Zn(2+) binding site. Asp279 contacts substrate.

The protein belongs to the metallo-dependent hydrolases superfamily. Adenosine and AMP deaminases family. Adenine deaminase type 2 subfamily. Requires Zn(2+) as cofactor.

It carries out the reaction adenine + H2O + H(+) = hypoxanthine + NH4(+). Its function is as follows. Catalyzes the hydrolytic deamination of adenine to hypoxanthine. Plays an important role in the purine salvage pathway and in nitrogen catabolism. This is Adenine deaminase from Zymomonas mobilis subsp. mobilis (strain ATCC 31821 / ZM4 / CP4).